A 704-amino-acid polypeptide reads, in one-letter code: Penicillin-binding protein H (704 aa).

Residues 23 to 43 (FFLAVFVLFTALIFKLGVVQI) form a helical membrane-spanning segment. A disordered region spans residues 197–223 (MNPNKSNSNGKNGALLDEKKNSSQRPK). Low complexity predominate over residues 200 to 209 (NKSNSNGKNG). Residues 212–223 (LDEKKNSSQRPK) are compositionally biased toward basic and acidic residues. Ser415 (acyl-ester intermediate) is an active-site residue.

This sequence belongs to the transpeptidase family.

The protein resides in the cell membrane. The enzyme catalyses Preferential cleavage: (Ac)2-L-Lys-D-Ala-|-D-Ala. Also transpeptidation of peptidyl-alanyl moieties that are N-acyl substituents of D-alanine.. It participates in cell wall biogenesis; peptidoglycan biosynthesis. Its function is as follows. Involved in the polymerization of peptidoglycan. Plays a redundant role with PBP-2A (pbpA) in determining the rod shape of the cell during vegetative growth and spore outgrowth. This is Penicillin-binding protein H from Bacillus subtilis (strain 168).